We begin with the raw amino-acid sequence, 200 residues long: Small ribosomal subunit protein uS4 (200 aa).

Residues 92–155 (SRLDAVVYSL…QNLDIIKESV (64 aa)) form the S4 RNA-binding domain.

This sequence belongs to the universal ribosomal protein uS4 family. As to quaternary structure, part of the 30S ribosomal subunit. Contacts protein S5. The interaction surface between S4 and S5 is involved in control of translational fidelity.

Its function is as follows. One of the primary rRNA binding proteins, it binds directly to 16S rRNA where it nucleates assembly of the body of the 30S subunit. With S5 and S12 plays an important role in translational accuracy. This is Small ribosomal subunit protein uS4 from Staphylococcus epidermidis (strain ATCC 35984 / DSM 28319 / BCRC 17069 / CCUG 31568 / BM 3577 / RP62A).